The primary structure comprises 220 residues: MTGISLGVNDIRNLSIFLGVSNKILKVSLGTEKVWPAFTPVLTTFATVGTYTYNIPDGAKFIDVILLGGGGGGKGMALADGWGRGGDAGSWAIVTLERGVHIPLSTKTITGLVGAGGAAGAGSVFSGKAGGPGGNTTASAVGWSGLTATGGPGGSVIDILSVAGKSPGDRTYNDQLYIGGAQQNSAGGNGNAPGGGGAGAQVSAQSGGAGARGQAWFFAY.

The interval Asn184–Gln205 is disordered. Over residues Gly187–Gly199 the composition is skewed to gly residues.

This is Gene 32 protein (32) from Mycobacterium (Mycobacteriophage L5).